The primary structure comprises 394 residues: Elongation factor Tu (394 aa).

The 195-residue stretch at 10–204 (KPHINVGTIG…ALDKYIPEPQ (195 aa)) folds into the tr-type G domain. The segment at 19–26 (GHVDHGKT) is G1. Residue 19 to 26 (GHVDHGKT) participates in GTP binding. Thr-26 is a Mg(2+) binding site. A G2 region spans residues 60–64 (GITIN). Residues 81–84 (DCPG) form a G3 region. GTP contacts are provided by residues 81–85 (DCPGH) and 136–139 (NKCD). The interval 136 to 139 (NKCD) is G4. The G5 stretch occupies residues 174-176 (SAL).

It belongs to the TRAFAC class translation factor GTPase superfamily. Classic translation factor GTPase family. EF-Tu/EF-1A subfamily. As to quaternary structure, monomer.

The protein localises to the cytoplasm. The enzyme catalyses GTP + H2O = GDP + phosphate + H(+). In terms of biological role, GTP hydrolase that promotes the GTP-dependent binding of aminoacyl-tRNA to the A-site of ribosomes during protein biosynthesis. The sequence is that of Elongation factor Tu from Hamiltonella defensa subsp. Acyrthosiphon pisum (strain 5AT).